The following is a 245-amino-acid chain: 1-(5-phosphoribosyl)-5-[(5-phosphoribosylamino)methylideneamino] imidazole-4-carboxamide isomerase (245 aa).

D7 serves as the catalytic Proton acceptor. The Proton donor role is filled by D129.

It belongs to the HisA/HisF family.

The protein localises to the cytoplasm. The enzyme catalyses 1-(5-phospho-beta-D-ribosyl)-5-[(5-phospho-beta-D-ribosylamino)methylideneamino]imidazole-4-carboxamide = 5-[(5-phospho-1-deoxy-D-ribulos-1-ylimino)methylamino]-1-(5-phospho-beta-D-ribosyl)imidazole-4-carboxamide. It participates in amino-acid biosynthesis; L-histidine biosynthesis; L-histidine from 5-phospho-alpha-D-ribose 1-diphosphate: step 4/9. This chain is 1-(5-phosphoribosyl)-5-[(5-phosphoribosylamino)methylideneamino] imidazole-4-carboxamide isomerase, found in Escherichia coli (strain 55989 / EAEC).